Consider the following 132-residue polypeptide: Myelin P2 protein (132 aa).

Position 2 is an N-acetylserine (Ser-2). Position 107 (Arg-107) interacts with (9Z)-octadecenoate. Arg-107 contacts hexadecanoate. An intrachain disulfide couples Cys-118 to Cys-125. 127 to 129 (RIY) contributes to the (9Z)-octadecenoate binding site. Residue 127–129 (RIY) participates in hexadecanoate binding.

It belongs to the calycin superfamily. Fatty-acid binding protein (FABP) family. Monomer. Detected in spinal cord (at protein level).

The protein localises to the cytoplasm. Its function is as follows. May play a role in lipid transport protein in Schwann cells. May bind cholesterol. The protein is Myelin P2 protein (PMP2) of Equus caballus (Horse).